Here is a 411-residue protein sequence, read N- to C-terminus: Actin-like protein 9 (411 aa).

A compositionally biased stretch (basic and acidic residues) spans 1 to 15 (MDVNGPKRWEPHRSL). The interval 1–23 (MDVNGPKRWEPHRSLDLNPRSTP) is disordered.

The protein belongs to the actin family. Interacts with ACTL7A.

The protein resides in the cytoplasmic vesicle. The protein localises to the secretory vesicle. Its subcellular location is the acrosome. It is found in the cytoplasm. It localises to the cytoskeleton. The protein resides in the perinuclear theca. Its function is as follows. Testis-specic protein that plays an important role in fusion of proacrosomal vesicles and perinuclear theca formation. This chain is Actin-like protein 9 (Actl9), found in Rattus norvegicus (Rat).